A 158-amino-acid chain; its full sequence is MNKKRNAPVRKIIADNRKARFNFEILDNLEVGLVLQGAEVKSLRSNHANIAESYASFENGELWLVNSYIPEYTQANRFNHEPRRLRKLLISKREMARFFNATSREGMTLVPLKLYFNERGRAKLEIALARGKKLHDKRETEKKRDWRCEKARLLKRYG.

It belongs to the SmpB family.

It is found in the cytoplasm. Its function is as follows. Required for rescue of stalled ribosomes mediated by trans-translation. Binds to transfer-messenger RNA (tmRNA), required for stable association of tmRNA with ribosomes. tmRNA and SmpB together mimic tRNA shape, replacing the anticodon stem-loop with SmpB. tmRNA is encoded by the ssrA gene; the 2 termini fold to resemble tRNA(Ala) and it encodes a 'tag peptide', a short internal open reading frame. During trans-translation Ala-aminoacylated tmRNA acts like a tRNA, entering the A-site of stalled ribosomes, displacing the stalled mRNA. The ribosome then switches to translate the ORF on the tmRNA; the nascent peptide is terminated with the 'tag peptide' encoded by the tmRNA and targeted for degradation. The ribosome is freed to recommence translation, which seems to be the essential function of trans-translation. In Bartonella quintana (strain Toulouse) (Rochalimaea quintana), this protein is SsrA-binding protein.